Here is a 258-residue protein sequence, read N- to C-terminus: Ribosomal RNA small subunit methyltransferase J (258 aa).

S-adenosyl-L-methionine is bound by residues 123–124 (ER) and aspartate 177. Residues 232–258 (IDGPKPSHSLEGKSSRYDIYPKKALKA) form a disordered region. The span at 239-252 (HSLEGKSSRYDIYP) shows a compositional bias: basic and acidic residues.

Belongs to the methyltransferase superfamily. RsmJ family.

The protein localises to the cytoplasm. The enzyme catalyses guanosine(1516) in 16S rRNA + S-adenosyl-L-methionine = N(2)-methylguanosine(1516) in 16S rRNA + S-adenosyl-L-homocysteine + H(+). Specifically methylates the guanosine in position 1516 of 16S rRNA. This chain is Ribosomal RNA small subunit methyltransferase J, found in Pseudomonas putida (strain W619).